The following is a 300-amino-acid chain: MGDKIVRATAANGGIRLVAVLTTNATREAKKRHGLSYLTSSILGRAFSASLLLASSMKIMHGRVTLRVRSDGPLKGLLVDAGRDGKVRGYVGNPNLELDLVKTKSNKYSFDFTKALGTGYLNIIRDNGFGEPFTSTVELVNGNIAEDLASYLYHSEQTPSAVFIGEKIQNKNLICSGGLLAQVLPKKETDPLLVSLLEDRCKEINSFSEDLFESKDDLLSIIKNIFPDIDDKSISENARTQEVRFECRCSKQRSLNAMKMLDKDELEDILKKEGKAELVCEFCKNKYLINFEEIEEMIKA.

2 disulfides stabilise this stretch: Cys247/Cys249 and Cys280/Cys283.

Belongs to the HSP33 family. Under oxidizing conditions two disulfide bonds are formed involving the reactive cysteines. Under reducing conditions zinc is bound to the reactive cysteines and the protein is inactive.

The protein localises to the cytoplasm. Its function is as follows. Redox regulated molecular chaperone. Protects both thermally unfolding and oxidatively damaged proteins from irreversible aggregation. Plays an important role in the bacterial defense system toward oxidative stress. In Prochlorococcus marinus (strain MIT 9515), this protein is 33 kDa chaperonin.